A 586-amino-acid chain; its full sequence is MELCGNVMTNSKYEMFRLKCLYCSIESELKDWELFIVHVKSAHYCEDEDVRINEIKEDTEELYSVVDAADPAIAYGPDEFFEVIENSNGVDQWMEADSKDIQYEEDATAWSAATNNSWEFGPGGSSLELPAGKEVTQMDESSQNHIPLNTDDDDVDCSDFFMSEDDLAPPRKPGRPPRRTRPGQVFKFKVSFIRSNPRVLHLIQAYKEHPCLWNPSDEHYQDEPARSMAYEAIMERMDRKANVLFTVEELKKTLEQLHVQYTLALETKQRGKLVGLAARYFAKCEFLSVAPVVTPRENEEDNDLTAIKLNFKEENLITTSFIETYANYPVLYNQALPDFGSIEIRADAFKRMAKEFQPVVKANETDVYIAVNKLRRWLYDAIRRLKSKELIQKCSKQEVQYLQMCSFLPAKGSESQVLYCDYCDKRFHGDYNLRVHIVKAHEVGDLPYLCSFCPRRFDRHVDMDRHKLRSHFERKLKCQYCEKSFAVDTDLKVHTLIHTGERPHVCDICGKTFRLKLLLDHHVNGVHLNIRPYSCNMCTKTFRKKFELANHIKGHLNIRDKKCEYCDATFYDHSSLSRHRRSHRSE.

The tract at residues 161 to 194 (FMSEDDLAPPRKPGRPPRRTRPGQVFKFKVSFIR) is involved in interaction with Cp190. The MADF 1 DNA-binding region spans 201–292 (HLIQAYKEHP…KCEFLSVAPV (92 aa)). The interval 294 to 319 (TPRENEEDNDLTAIKLNFKEENLITT) is involved in interaction with Cp190. The segment at residues 320–413 (SFIETYANYP…MCSFLPAKGS (94 aa)) is a DNA-binding region (MADF 2). C2H2-type zinc fingers lie at residues 418-441 (LYCD…VKAH), 448-471 (YLCS…LRSH), 476-498 (LKCQ…TLIH), 504-527 (HVCD…NGVH), 533-555 (YSCN…IKGH), and 561-583 (KKCE…RRSH).

As to quaternary structure, interacts (via regions flanking MADF domain 1) with Cp190 (via regions between the BTB domain and first zinc finger domain); the interaction is probably direct and is essential for protein function.

Its subcellular location is the nucleus. It localises to the chromosome. The protein resides in the nucleoplasm. Functionally, chromatin-binding protein involved in the organization of active promoters and insulators. Essential for the activity of heterochromatin promoters; primarily binds to specific motifs within promoters of housekeeping genes. May also associate to a lesser extent with promoters in euchromatin. Mediates recruitment of Cp190, a multifunctional protein involved in the recruitment of transcription complexes, the creation of open chromatin regions and the activity of insulators. Cooperates with pita and su(Hw) to recruit Cp190 and regulate insulator function at the front-ultraabdominal (Fub) boundary. May cooperate with other C2H2 zinc finger proteins, such as M1BP, to recruit CP190 to promoters. May be involved in cellular organization and development of the eye. This chain is Madf and zinc finger protein 1, found in Drosophila melanogaster (Fruit fly).